The primary structure comprises 132 residues: MPKQVIIPPGTSTPIAPFVPGTLADGVVYVSGTLPFDSANNVVYPGDPKAQTRHVLETIRRVIETAGGTMEDVTFNSIFITDWKNYAAINEIYAEFFPGDKPARFCIQCGLVKPEALVEIATVAHIGQPGGA.

The protein belongs to the RutC family.

It carries out the reaction (Z)-3-aminoacrylate + H2O + H(+) = 3-oxopropanoate + NH4(+). Functionally, involved in pyrimidine catabolism. Catalyzes the deamination of 3-aminoacrylate to malonic semialdehyde, a reaction that can also occur spontaneously. RutC may facilitate the reaction and modulate the metabolic fitness, rather than catalyzing essential functions. This Cronobacter sakazakii (strain ATCC BAA-894) (Enterobacter sakazakii) protein is 3-aminoacrylate deaminase RutC.